The chain runs to 295 residues: UDP-N-acetylenolpyruvoylglucosamine reductase (295 aa).

In terms of domain architecture, FAD-binding PCMH-type spans 26–189; the sequence is VGGRADILFK…VEAEFKGVNS (164 aa). Arg169 is a catalytic residue. Residue Cys218 is the Proton donor of the active site. The active site involves Glu288.

Belongs to the MurB family. Requires FAD as cofactor.

The protein resides in the cytoplasm. It carries out the reaction UDP-N-acetyl-alpha-D-muramate + NADP(+) = UDP-N-acetyl-3-O-(1-carboxyvinyl)-alpha-D-glucosamine + NADPH + H(+). The protein operates within cell wall biogenesis; peptidoglycan biosynthesis. Functionally, cell wall formation. The sequence is that of UDP-N-acetylenolpyruvoylglucosamine reductase from Wolbachia sp. subsp. Drosophila simulans (strain wRi).